The following is a 238-amino-acid chain: Neuromodulin (238 aa).

The interval 1–238 is disordered; it reads MLCCMRRTKQ…EEPEADQEHA (238 aa). S-palmitoyl cysteine attachment occurs at residues C3 and C4. Residues 9–32 are compositionally biased toward basic and acidic residues; the sequence is KQVEKNDDDQKIEQDGIKPEDKAH. Positions 31-60 constitute an IQ domain; sequence AHKAATKIQASFRGHITRKKLKGEKKDDVQ. The residue at position 41 (S41) is a Phosphoserine; by PHK and PKC. A compositionally biased stretch (basic and acidic residues) spans 54-83; the sequence is EKKDDVQAAEAEANKKDEAPVADGVEKKGE. The span at 84-95 shows a compositional bias: low complexity; the sequence is GTTTAEAAPATG. Residues 97–116 show a composition bias toward basic and acidic residues; it reads KPDEPGKAGETPSEEKKGEG. The span at 119-130 shows a compositional bias: low complexity; the sequence is ATEQAAPQAPAS. Residues 139-154 show a composition bias toward polar residues; that stretch reads ETESATKASTDNSPSS. S151, S153, and S154 each carry phosphoserine. The segment covering 155 to 167 has biased composition (basic and acidic residues); it reads KAEDAPAKEEPKQ. Low complexity predominate over residues 168–199; that stretch reads ADVPAAVTAAAATTPAAEDAAAKATAQPPTET. The residue at position 181 (T181) is a Phosphothreonine. Phosphoserine; by CK2 occurs at positions 202 and 203. The segment covering 213-225 has biased composition (basic and acidic residues); sequence DETKPKESARQDE. The segment covering 226–238 has biased composition (acidic residues); it reads GKEEEPEADQEHA.

Belongs to the neuromodulin family. In terms of assembly, identified in a complex containing FGFR4, NCAM1, CDH2, PLCG1, FRS2, SRC, SHC1, GAP43 and CTTN. Interacts (via IQ domain) with calmodulin. Binds calmodulin with a greater affinity in the absence of Ca(2+) than in its presence. Post-translationally, phosphorylated. Phosphorylation of this protein by a protein kinase C is specifically correlated with certain forms of synaptic plasticity. Palmitoylated by ZDHHC3. Palmitoylation is regulated by ARF6 and is essential for plasma membrane association and axonal and dendritic filopodia induction. Deacylated by LYPLA2.

It localises to the cell membrane. The protein resides in the cell projection. Its subcellular location is the growth cone membrane. It is found in the synapse. The protein localises to the filopodium membrane. It localises to the perikaryon. The protein resides in the dendrite. Its subcellular location is the axon. It is found in the cytoplasm. Its function is as follows. This protein is associated with nerve growth. It is a major component of the motile 'growth cones' that form the tips of elongating axons. Plays a role in axonal and dendritic filopodia induction. The sequence is that of Neuromodulin (GAP43) from Homo sapiens (Human).